A 263-amino-acid polypeptide reads, in one-letter code: Esterase mokD (263 aa).

Catalysis depends on charge relay system residues serine 134, aspartate 208, and histidine 236.

It belongs to the LovG family.

It catalyses the reaction dihydromonacolin L-[lovastatin nonaketide synthase] + H2O = holo-[lovastatin nonaketide synthase] + dihydromonacolin L carboxylate + H(+). Its pathway is polyketide biosynthesis; lovastatin biosynthesis. Esterase; part of the gene cluster that mediates the biosynthesis of monakolin K, also known as lovastatin, and which acts as a potent competitive inhibitor of HMG-CoA reductase. Monakolin K biosynthesis is performed in two stages. The first stage is catalyzed by the nonaketide synthase mokA, which belongs to type I polyketide synthases and catalyzes the iterative nine-step formation of the polyketide. This PKS stage completed by the action of dehydrogenase mokE, which catalyzes the NADPH-dependent reduction of the unsaturated tetra-, penta- and heptaketide intermediates that arise during the mokA-mediated biosynthesis of the nonaketide chain and leads to dihydromonacolin L. Covalently bound dihydromonacolin L is released from mokA by the mokD esterase. Conversion of dihydromonacolin L into monacolin L and then monacolin J is subsequently performed with the participation of molecular oxygen and P450 monoogygenase mokC. Finally, mokF performs the conversion of monacoline J to monacoline K through the addition of the side-chain diketide moiety (2R)-2-methylbutanoate produced by the diketide synthase mokB. The protein is Esterase mokD of Monascus pilosus (Red mold).